A 360-amino-acid chain; its full sequence is Codeine O-demethylase (360 aa).

Residues glycine 211–serine 311 form the Fe2OG dioxygenase domain. Tyrosine 220 contacts 2-oxoglutarate. Fe cation-binding residues include histidine 235, aspartate 237, and histidine 292. Arginine 302 and serine 304 together coordinate 2-oxoglutarate.

The protein belongs to the iron/ascorbate-dependent oxidoreductase family. L-ascorbate serves as cofactor. Fe cation is required as a cofactor. As to expression, mainly expressed in stems, capsules and leaves and, to a lower extent, in roots.

The catalysed reaction is codeine + 2-oxoglutarate + O2 = morphine + formaldehyde + succinate + CO2. The enzyme catalyses thebaine + 2-oxoglutarate + O2 = oripavine + formaldehyde + succinate + CO2. It catalyses the reaction (S)-scoulerine + 2-oxoglutarate + O2 = (S)-3-O-demethylscoulerine + formaldehyde + succinate + CO2. It carries out the reaction thebaine + 2-oxoglutarate + O2 = neopinone + formaldehyde + succinate + CO2. The catalysed reaction is (S)-reticuline + 2-oxoglutarate + O2 = (S)-6-O-demethylreticuline + formaldehyde + succinate + CO2. The enzyme catalyses (S)-tetrahydropalmatine + S-adenosyl-L-methionine = (S)-cis-N-methyltetrahydropalmatine + S-adenosyl-L-homocysteine. It participates in alkaloid biosynthesis; morphine biosynthesis. With respect to regulation, moderate substrate inhibition. Not inhibited in vitro by acylcyclohexanediones. Non-heme dioxygenase involved in biosynthesis of morphinan-type benzylisoquinoline and opiate alkaloids natural products. Mediates the conversion of codeine to morphine. Also catalyzes, with lower efficiency, the 3-O-demethylation of thebaine to oripavine and of (S)-scoulerine to 3-O-demethylscoulerine. Supports, with a lower turnover, the conversion of codeinone to morphinone, of thebaine to neopinone, and of neopine to neomorphine. Supports dealkylation reactions such as O,O-demethylenation in the metabolism of protopine, benzo[c]phenanthridine, and rhoeadine alkaloids; cleaves a methylenedioxy bridge leaving two hydroxyl groups. Catalyzes the O,O-demethylenation of methylenedioxy bridges on protopine alkaloids such as allocryptopine, cryptopine and protopine. No activity with (S)-reticuline, salutaridine, papaverine, (S)-corytuberine, oripavine, pavine or noscapine. This Papaver somniferum (Opium poppy) protein is Codeine O-demethylase.